A 272-amino-acid polypeptide reads, in one-letter code: Phosphate import ATP-binding protein PstB (272 aa).

The 242-residue stretch at 26–267 (IVVKNWNLYY…PQVKRTEDYI (242 aa)) folds into the ABC transporter domain. 58 to 65 (GPSGCGKS) contributes to the ATP binding site.

It belongs to the ABC transporter superfamily. Phosphate importer (TC 3.A.1.7) family. As to quaternary structure, the complex is composed of two ATP-binding proteins (PstB), two transmembrane proteins (PstC and PstA) and a solute-binding protein (PstS).

Its subcellular location is the cell inner membrane. It catalyses the reaction phosphate(out) + ATP + H2O = ADP + 2 phosphate(in) + H(+). Functionally, part of the ABC transporter complex PstSACB involved in phosphate import. Responsible for energy coupling to the transport system. This chain is Phosphate import ATP-binding protein PstB, found in Hydrogenovibrio crunogenus (strain DSM 25203 / XCL-2) (Thiomicrospira crunogena).